Here is a 570-residue protein sequence, read N- to C-terminus: Formate--tetrahydrofolate ligase (570 aa).

65–72 (TPFGEGKT) provides a ligand contact to ATP.

This sequence belongs to the formate--tetrahydrofolate ligase family.

It carries out the reaction (6S)-5,6,7,8-tetrahydrofolate + formate + ATP = (6R)-10-formyltetrahydrofolate + ADP + phosphate. The protein operates within one-carbon metabolism; tetrahydrofolate interconversion. This Shewanella sediminis (strain HAW-EB3) protein is Formate--tetrahydrofolate ligase.